A 258-amino-acid polypeptide reads, in one-letter code: UPF0246 protein plu0566 (258 aa).

Belongs to the UPF0246 family.

The sequence is that of UPF0246 protein plu0566 from Photorhabdus laumondii subsp. laumondii (strain DSM 15139 / CIP 105565 / TT01) (Photorhabdus luminescens subsp. laumondii).